We begin with the raw amino-acid sequence, 447 residues long: GTPase Era, mitochondrial (447 aa).

The transit peptide at 1-18 (MTLRSCETFLRRSLRFST) directs the protein to the mitochondrion. The Era-type G domain maps to 109 to 340 (KSLKVAIVGS…RYLFVAAKPC (232 aa)). The interval 117-124 (GSPNAGKS) is G1. Residue 117 to 124 (GSPNAGKS) participates in GTP binding. The interval 143–147 (HTTRS) is G2. A G3 region spans residues 164 to 167 (DTPG). Residues 164-168 (DTPGL) and 233-236 (NKVD) contribute to the GTP site. Residues 233 to 236 (NKVD) are G4. A G5 region spans residues 318–320 (LSS). Residues 370–447 (LPKEVPYTMT…RLKISVKLRK (78 aa)) form the KH type-2 domain.

This sequence belongs to the TRAFAC class TrmE-Era-EngA-EngB-Septin-like GTPase superfamily. Era GTPase family.

It localises to the mitochondrion matrix. The protein localises to the mitochondrion inner membrane. Its function is as follows. Probable GTPase that plays a role in the mitochondrial ribosomal small subunit assembly. Specifically binds the 12S mitochondrial rRNA (12S mt-rRNA) to a 33 nucleotide section delineating the 3' terminal stem-loop region. May act as a chaperone that protects the 12S mt-rRNA on the 28S mitoribosomal subunit during ribosomal small subunit assembly. This Danio rerio (Zebrafish) protein is GTPase Era, mitochondrial (eral1).